Here is a 130-residue protein sequence, read N- to C-terminus: Phosphoribosyl-AMP cyclohydrolase (130 aa).

Aspartate 74 is a Mg(2+) binding site. Residue cysteine 75 coordinates Zn(2+). Residues aspartate 76 and aspartate 78 each coordinate Mg(2+). Cysteine 91 and cysteine 98 together coordinate Zn(2+).

This sequence belongs to the PRA-CH family. Homodimer. Requires Mg(2+) as cofactor. The cofactor is Zn(2+).

The protein resides in the cytoplasm. The enzyme catalyses 1-(5-phospho-beta-D-ribosyl)-5'-AMP + H2O = 1-(5-phospho-beta-D-ribosyl)-5-[(5-phospho-beta-D-ribosylamino)methylideneamino]imidazole-4-carboxamide. The protein operates within amino-acid biosynthesis; L-histidine biosynthesis; L-histidine from 5-phospho-alpha-D-ribose 1-diphosphate: step 3/9. Functionally, catalyzes the hydrolysis of the adenine ring of phosphoribosyl-AMP. This chain is Phosphoribosyl-AMP cyclohydrolase, found in Bradyrhizobium sp. (strain ORS 278).